The chain runs to 776 residues: 5-methyltetrahydropteroyltriglutamate--homocysteine methyltransferase (776 aa).

5-methyltetrahydropteroyltri-L-glutamate-binding positions include 13-16 and K127; that span reads RELK. Residues 450 to 452 and E503 each bind L-homocysteine; that span reads IGS. Residues 450 to 452 and E503 each bind L-methionine; that span reads IGS. Residue W580 coordinates 5-methyltetrahydropteroyltri-L-glutamate. Residue D618 participates in L-homocysteine binding. Residue D618 coordinates L-methionine. A 5-methyltetrahydropteroyltri-L-glutamate-binding site is contributed by E624. Zn(2+) is bound by residues H660, C662, and E684. H713 acts as the Proton donor in catalysis. Residue C745 coordinates Zn(2+).

Belongs to the vitamin-B12 independent methionine synthase family. Requires Zn(2+) as cofactor.

It carries out the reaction 5-methyltetrahydropteroyltri-L-glutamate + L-homocysteine = tetrahydropteroyltri-L-glutamate + L-methionine. It participates in amino-acid biosynthesis; L-methionine biosynthesis via de novo pathway; L-methionine from L-homocysteine (MetE route): step 1/1. Its function is as follows. Catalyzes the transfer of a methyl group from 5-methyltetrahydrofolate to homocysteine resulting in methionine formation. The sequence is that of 5-methyltetrahydropteroyltriglutamate--homocysteine methyltransferase from Mesorhizobium japonicum (strain LMG 29417 / CECT 9101 / MAFF 303099) (Mesorhizobium loti (strain MAFF 303099)).